A 724-amino-acid polypeptide reads, in one-letter code: Actin-related protein 5 (724 aa).

Disordered stretches follow at residues 358-391 (QSLRKARGEPKNEPAEYEENPDSLNNEKYPLMNV), 412-450 (TTAEGRLRARQKRNEEELEKEKRNQLEEERRRENPESYL), and 467-488 (KKRLKTNGSSNGNNKSGGIGRG). The segment covering 414–446 (AEGRLRARQKRNEEELEKEKRNQLEEERRRENP) has biased composition (basic and acidic residues). Position 542 is a phosphoserine (Ser-542).

Belongs to the actin family. ARP5 subfamily. In terms of assembly, component of the INO80 chromatin-remodeling complex. Interacts with EEN. As to expression, expressed ubiquitously in seedlings, roots, leaves, buds, flowers and siliques.

It localises to the nucleus. The protein localises to the nucleoplasm. Its subcellular location is the cytoplasm. In terms of biological role, probable subunit of a chromatin-remodeling complex. Involved in DNA repair. Required for multicellular development of all organs. This Arabidopsis thaliana (Mouse-ear cress) protein is Actin-related protein 5.